Here is a 156-residue protein sequence, read N- to C-terminus: NADH-ubiquinone oxidoreductase 20 kDa subunit (156 aa).

Residues cysteine 33, cysteine 34, cysteine 98, and cysteine 128 each coordinate [4Fe-4S] cluster.

The protein belongs to the complex I 20 kDa subunit family. It depends on [4Fe-4S] cluster as a cofactor.

The protein resides in the mitochondrion. It catalyses the reaction a ubiquinone + NADH + 5 H(+)(in) = a ubiquinol + NAD(+) + 4 H(+)(out). The protein is NADH-ubiquinone oxidoreductase 20 kDa subunit (NAD10) of Paramecium tetraurelia.